We begin with the raw amino-acid sequence, 313 residues long: uncharacterized protein (313 aa).

6 helical membrane-spanning segments follow: residues 16-36 (AGTW…AFLA), 106-126 (FTIL…ANEF), 155-175 (FGLL…LIFF), 208-228 (LSES…SAVF), 233-253 (LAVG…AFIA), and 286-306 (FSLV…FGIF).

Its subcellular location is the cell membrane. This is an uncharacterized protein from Bacillus subtilis (strain 168).